The chain runs to 264 residues: Polyneuridine aldehyde esterase (264 aa).

Residues M1–N6 constitute a propeptide that is removed on maturation. The AB hydrolase-1 domain occupies H12–T122. Active-site residues include S87, D216, and H244. S87 contributes to the 16-epivellosimine binding site.

Belongs to the AB hydrolase superfamily. As to quaternary structure, homodimer; homodimerizes in aqueous solutions at pH 7.0. In terms of tissue distribution, mainly expressed in roots and, to a lower level, in leaves.

The catalysed reaction is polyneuridine aldehyde + H2O = 16-epivellosimine + methanol + CO2. The protein operates within alkaloid biosynthesis; ajmaline biosynthesis. Inhibited by DEPC and HgCl(2). Functionally, hydrolase involved in the biosynthesis of ajmaline-type monoterpenoid indole alkaloids (MIAs) natural products, important plant-derived pharmaceuticals used in the therapy of heart disorders. Catalyzes the hydrolysis of polyneuridine aldehyde into epi-vellosimine, precursor of vomilenine, an intermediate chemical in the biosynthesis of ajmaline. The polypeptide is Polyneuridine aldehyde esterase (Rauvolfia serpentina (Serpentine wood)).